Here is a 314-residue protein sequence, read N- to C-terminus: DNA-directed RNA polymerase subunit alpha (314 aa).

Residues 1–228 (MIEIEKPKIE…EHLNIFVGLT (228 aa)) form an alpha N-terminal domain (alpha-NTD) region. The alpha C-terminal domain (alpha-CTD) stretch occupies residues 245–314 (KEKVLEMTIE…ELGLSLRKDD (70 aa)).

Belongs to the RNA polymerase alpha chain family. As to quaternary structure, homodimer. The RNAP catalytic core consists of 2 alpha, 1 beta, 1 beta' and 1 omega subunit. When a sigma factor is associated with the core the holoenzyme is formed, which can initiate transcription.

The enzyme catalyses RNA(n) + a ribonucleoside 5'-triphosphate = RNA(n+1) + diphosphate. Its function is as follows. DNA-dependent RNA polymerase catalyzes the transcription of DNA into RNA using the four ribonucleoside triphosphates as substrates. The sequence is that of DNA-directed RNA polymerase subunit alpha from Geobacillus kaustophilus (strain HTA426).